A 142-amino-acid polypeptide reads, in one-letter code: Large ribosomal subunit protein uL13 (142 aa).

The protein belongs to the universal ribosomal protein uL13 family. In terms of assembly, part of the 50S ribosomal subunit.

Its function is as follows. This protein is one of the early assembly proteins of the 50S ribosomal subunit, although it is not seen to bind rRNA by itself. It is important during the early stages of 50S assembly. This chain is Large ribosomal subunit protein uL13, found in Psychrobacter arcticus (strain DSM 17307 / VKM B-2377 / 273-4).